A 281-amino-acid polypeptide reads, in one-letter code: Pantothenate synthetase (281 aa).

Position 30–37 (30–37 (MGALHHGH)) interacts with ATP. The active-site Proton donor is His-37. Gln-61 lines the (R)-pantoate pocket. Gln-61 is a binding site for beta-alanine. 147 to 150 (GEKD) lines the ATP pocket. Residue Gln-153 participates in (R)-pantoate binding. Residues Leu-176 and 184–187 (SSSR) contribute to the ATP site.

Belongs to the pantothenate synthetase family. Homodimer.

It localises to the cytoplasm. It carries out the reaction (R)-pantoate + beta-alanine + ATP = (R)-pantothenate + AMP + diphosphate + H(+). The protein operates within cofactor biosynthesis; (R)-pantothenate biosynthesis; (R)-pantothenate from (R)-pantoate and beta-alanine: step 1/1. In terms of biological role, catalyzes the condensation of pantoate with beta-alanine in an ATP-dependent reaction via a pantoyl-adenylate intermediate. The sequence is that of Pantothenate synthetase from Bartonella bacilliformis (strain ATCC 35685 / KC583 / Herrer 020/F12,63).